Here is a 942-residue protein sequence, read N- to C-terminus: DNA mismatch repair protein MutS (942 aa).

Position 613 to 620 (613 to 620 (GPNMAGKS)) interacts with ATP.

Belongs to the DNA mismatch repair MutS family.

In terms of biological role, this protein is involved in the repair of mismatches in DNA. It is possible that it carries out the mismatch recognition step. This protein has a weak ATPase activity. This Clostridium botulinum (strain Eklund 17B / Type B) protein is DNA mismatch repair protein MutS.